Consider the following 258-residue polypeptide: UPF0246 protein Jann_0444 (258 aa).

Belongs to the UPF0246 family.

This Jannaschia sp. (strain CCS1) protein is UPF0246 protein Jann_0444.